The sequence spans 137 residues: Large ribosomal subunit protein uL16 (137 aa).

The protein belongs to the universal ribosomal protein uL16 family. In terms of assembly, part of the 50S ribosomal subunit.

Functionally, binds 23S rRNA and is also seen to make contacts with the A and possibly P site tRNAs. This is Large ribosomal subunit protein uL16 from Brucella abortus (strain S19).